Reading from the N-terminus, the 107-residue chain is uncharacterized protein (107 aa).

This is an uncharacterized protein from Methanocaldococcus jannaschii (strain ATCC 43067 / DSM 2661 / JAL-1 / JCM 10045 / NBRC 100440) (Methanococcus jannaschii).